Consider the following 192-residue polypeptide: Xanthine phosphoribosyltransferase (192 aa).

L20 and N27 together coordinate xanthine. 128 to 132 (AQGEA) is a binding site for 5-phospho-alpha-D-ribose 1-diphosphate. Residue K156 coordinates xanthine.

Belongs to the purine/pyrimidine phosphoribosyltransferase family. Xpt subfamily. In terms of assembly, homodimer.

Its subcellular location is the cytoplasm. It catalyses the reaction XMP + diphosphate = xanthine + 5-phospho-alpha-D-ribose 1-diphosphate. It participates in purine metabolism; XMP biosynthesis via salvage pathway; XMP from xanthine: step 1/1. In terms of biological role, converts the preformed base xanthine, a product of nucleic acid breakdown, to xanthosine 5'-monophosphate (XMP), so it can be reused for RNA or DNA synthesis. The polypeptide is Xanthine phosphoribosyltransferase (Lactobacillus helveticus (strain DPC 4571)).